We begin with the raw amino-acid sequence, 2532 residues long: Lovastatin diketide synthase lovF (2532 aa).

The region spanning 10–430 (PAPIAMVGMG…GANAHAIVEQ (421 aa)) is the Ketosynthase family 3 (KS3) domain. Catalysis depends on for beta-ketoacyl synthase activity residues Cys-183, His-318, and His-353. The interval 545–870 (VFTGQGAQWF…PYLSCLSRGK (326 aa)) is malonyl-CoA:ACP transacylase (MAT) domain. The For malonyltransferase activity role is filled by Ser-635. An N-terminal hotdog fold region spans residues 941-1078 (HDLIGLQEPL…GLVRAEMDQP (138 aa)). Residues 941 to 1246 (HDLIGLQEPL…LEGLVFQSLG (306 aa)) form a dehydratase (DH) domain region. Residues 941–1251 (HDLIGLQEPL…FQSLGASLGT (311 aa)) enclose the PKS/mFAS DH domain. Residue His-973 is the Proton acceptor; for dehydratase activity of the active site. The segment at 1075 to 1094 (MDQPPSSLSNQQRIDPRPWS) is disordered. Over residues 1078 to 1087 (PPSSLSNQQR) the composition is skewed to polar residues. The tract at residues 1092-1251 (PWSRKTAPQE…FQSLGASLGT (160 aa)) is C-terminal hotdog fold. Residue Asp-1159 is the Proton donor; for dehydratase activity of the active site. Residues 1423–1607 (ELVRLCCHKN…ARDCDSHEFY (185 aa)) form a methyltransferase (CMet) domain region. An enoylreductase (ER) domain region spans residues 1825 to 2144 (GLLDSLHFTK…SGQHVGKIVV (320 aa)). The tract at residues 2168 to 2340 (SYLVAGGLGG…AVTIDLGMVQ (173 aa)) is ketoreductase (KR) domain. The 78-residue stretch at 2453–2530 (ESIAVIMEAM…KVAEVVLQRY (78 aa)) folds into the Carrier domain. Residue Ser-2490 is modified to O-(pantetheine 4'-phosphoryl)serine.

Interacts with LovD. Pantetheine 4'-phosphate is required as a cofactor.

It catalyses the reaction holo-[2-methylbutanoate polyketide synthase] + 2 malonyl-CoA + S-adenosyl-L-methionine + 2 NADPH + 3 H(+) = (S)-2-methylbutanoyl-[2-methylbutanoate polyketide synthase] + S-adenosyl-L-homocysteine + 2 CO2 + 2 NADP(+) + 2 CoA + H2O. The protein operates within polyketide biosynthesis; lovastatin biosynthesis. In terms of biological role, lovastatin diketide synthase; part of the gene cluster that mediates the biosynthesis of lovastatin (also known as mevinolin, mevacor or monacolin K), a hypolipidemic inhibitor of (3S)-hydroxymethylglutaryl-coenzyme A (HMG-CoA) reductase (HMGR). The first step in the biosynthesis of lovastatin is the production of dihydromonacolin L acid by the lovastatin nonaketide synthase lovB and the trans-acting enoyl reductase lovC via condensation of one acetyl-CoA unit and 8 malonyl-CoA units. Dihydromonacolin L acid is released from lovB by the thioesterase lovG. Next, dihydromonacolin L acid is oxidized by the dihydromonacolin L monooxygenase lovA twice to form monacolin J acid. The 2-methylbutyrate moiety of lovastatin is synthesized by the lovastatin diketide synthase lovF via condensation of one acetyl-CoA unit and one malonyl-CoA unit. Finally, the covalent attachment of this moiety to monacolin J acid is catalyzed by the transesterase lovD to yield lovastatin. LovD has broad substrate specificity and can also convert monacolin J to simvastatin using alpha-dimethylbutanoyl-S-methyl-3-mercaptopropionate (DMB-S-MMP) as the thioester acyl donor, and can also catalyze the reverse reaction and function as hydrolase in vitro. LovD has much higher activity with LovF-bound 2-methylbutanoate than with free diketide substrates. In Aspergillus terreus, this protein is Lovastatin diketide synthase lovF.